Consider the following 840-residue polypeptide: Radial spoke head 10 homolog B (840 aa).

Basic and acidic residues-rich tracts occupy residues M1–A16 and Q51–S63. Positions M1–Y74 are disordered. MORN repeat units follow at residues S86 to C108, T109 to L131, K132 to S154, T155 to P177, S179 to G201, W204 to N226, I227 to N249, E251 to R273, E284 to A306, and M307 to R329. Residues K758 to V801 adopt a coiled-coil conformation. A disordered region spans residues V810–K840.

As to quaternary structure, interacts with RSPH6A. Does not appear to be part of the axonemal radial spoke complexes 1 or 2.

Its subcellular location is the cytoplasm. It is found in the cytoskeleton. It localises to the cilium axoneme. The protein resides in the cell projection. The protein localises to the cilium. Its subcellular location is the flagellum. May function as part of the axonemal radial spoke complex 3 (RS3). Radial spoke complexes are important for ciliary motility. The chain is Radial spoke head 10 homolog B (RSPH10B) from Bos taurus (Bovine).